Reading from the N-terminus, the 526-residue chain is Vang-like protein 1 (526 aa).

Positions 1–15 (MDTESTYSGYSYYSS) are enriched in low complexity. A disordered region spans residues 1–87 (MDTESTYSGY…TTAITGTSEH (87 aa)). The Cytoplasmic portion of the chain corresponds to 1–114 (MDTESTYSGY…VGLDCKRYLG (114 aa)). Polar residues predominate over residues 75–87 (GETTTAITGTSEH). Phosphoserine is present on residues Ser-88 and Ser-90. Residues 115 to 135 (LTVASFLGLLVFLTPIAFILL) form a helical membrane-spanning segment. Topologically, residues 136–153 (PQILWREELKPCGAICEG) are extracellular. The chain crosses the membrane as a helical span at residues 154 to 174 (LLISVSFKLLILLIGTWALFF). Over 175 to 184 (RKQRADVPRV) the chain is Cytoplasmic. A helical membrane pass occupies residues 185-205 (FVFRALLLVLIFLFVVSYWLF). Over 206–224 (YGVRILDSRDQNYKDIVQY) the chain is Extracellular. Residues 225–245 (AVSLVDALLFIHYLAIVLLEL) traverse the membrane as a helical segment. Residues 246–526 (RQLQPMFTLQ…VLRLQSETSV (281 aa)) lie on the Cytoplasmic side of the membrane.

It belongs to the Vang family. Heterodimer with Vangl2. Interacts through its C-terminal region with the N-terminal half of DVL1, DVL2 and DVL3. The PDZ domain of DVL1, DVL2 and DVL3 is required for the interaction.

It is found in the cell membrane. The chain is Vang-like protein 1 (Vangl1) from Mus musculus (Mouse).